A 765-amino-acid polypeptide reads, in one-letter code: Phosphoribosylformylglycinamidine synthase subunit PurL (765 aa).

H57 is an active-site residue. Residues Y60 and R104 each contribute to the ATP site. Residue E106 coordinates Mg(2+). Substrate is bound by residues 107 to 110 (SHNH) and R129. The active-site Proton acceptor is H108. Position 130 (D130) interacts with Mg(2+). Residue Q254 participates in substrate binding. D282 serves as a coordination point for Mg(2+). 326 to 328 (ESQ) lines the substrate pocket. N508 and G545 together coordinate ATP. N546 lines the Mg(2+) pocket. Residue S548 participates in substrate binding.

Belongs to the FGAMS family. Monomer. Part of the FGAM synthase complex composed of 1 PurL, 1 PurQ and 2 PurS subunits.

It is found in the cytoplasm. The catalysed reaction is N(2)-formyl-N(1)-(5-phospho-beta-D-ribosyl)glycinamide + L-glutamine + ATP + H2O = 2-formamido-N(1)-(5-O-phospho-beta-D-ribosyl)acetamidine + L-glutamate + ADP + phosphate + H(+). It participates in purine metabolism; IMP biosynthesis via de novo pathway; 5-amino-1-(5-phospho-D-ribosyl)imidazole from N(2)-formyl-N(1)-(5-phospho-D-ribosyl)glycinamide: step 1/2. Functionally, part of the phosphoribosylformylglycinamidine synthase complex involved in the purines biosynthetic pathway. Catalyzes the ATP-dependent conversion of formylglycinamide ribonucleotide (FGAR) and glutamine to yield formylglycinamidine ribonucleotide (FGAM) and glutamate. The FGAM synthase complex is composed of three subunits. PurQ produces an ammonia molecule by converting glutamine to glutamate. PurL transfers the ammonia molecule to FGAR to form FGAM in an ATP-dependent manner. PurS interacts with PurQ and PurL and is thought to assist in the transfer of the ammonia molecule from PurQ to PurL. This chain is Phosphoribosylformylglycinamidine synthase subunit PurL, found in Corynebacterium aurimucosum (strain ATCC 700975 / DSM 44827 / CIP 107346 / CN-1) (Corynebacterium nigricans).